We begin with the raw amino-acid sequence, 104 residues long: Large ribosomal subunit protein bL21 (104 aa).

The protein belongs to the bacterial ribosomal protein bL21 family. In terms of assembly, part of the 50S ribosomal subunit. Contacts protein L20.

Its function is as follows. This protein binds to 23S rRNA in the presence of protein L20. In Clostridium botulinum (strain 657 / Type Ba4), this protein is Large ribosomal subunit protein bL21.